Reading from the N-terminus, the 525-residue chain is Allantoate deiminase (525 aa).

Positions 1–53 (MAVPHPSSSSSRSHPFLSHVYHTSFHHHHHHNHPSLVLFWCLVFSLLSPLALS) are cleaved as a signal peptide. Positions 56 to 75 (SSSSSSSSDSSSSSSSHISL) are enriched in low complexity. Positions 56–78 (SSSSSSSSDSSSSSSSHISLGIG) are disordered. Asn-156 carries N-linked (GlcNAc...) asparagine glycosylation. Mn(2+) is bound by residues His-167, Asp-178, Glu-215, His-281, and His-499.

The protein belongs to the peptidase M20A family. In terms of assembly, homodimer. The cofactor is Mn(2+). As to expression, expressed in seedlings, roots, stems, leaves, flowers, siliques and seeds.

Its subcellular location is the endoplasmic reticulum. It carries out the reaction allantoate + H2O + 2 H(+) = (S)-2-ureidoglycine + NH4(+) + CO2. Its activity is regulated as follows. Inhibited by borate, fluoride, L-Asn and L-Asp, but not by phenylphosphorodiamidate. Its function is as follows. Involved in the catabolism of purine nucleotides. Can use allantoate as substrate, but not Nalpha-carbamoyl-L-Asp, Nalpha-carbamoyl-L-Ala or Nalpha-carbamoyl-Gly. The sequential activity of AAH, UGLYAH and UAH allows a complete purine breakdown without the intermediate generation of urea. Involved in the regulation of seed maturation and seed dormancy. The polypeptide is Allantoate deiminase (Arabidopsis thaliana (Mouse-ear cress)).